The following is an 859-amino-acid chain: Heterogeneous nuclear ribonucleoprotein U-like protein 1 (859 aa).

The segment at 1-103 (MDVRRLKVNE…GPDGHYVMDN (103 aa)) is necessary for interaction with HRMT1L1. The SAP domain maps to 3–37 (VRRLKVNELREELQRRGLDTRGLKAELAERLLAAL). Positions 36–131 (ALEAEEPEDE…SSYDRRPLDM (96 aa)) are disordered. The segment covering 38–54 (EAEEPEDERELEADDDP) has biased composition (acidic residues). Over residues 77-88 (QPPPPGLQPHPE) the composition is skewed to pro residues. A Glycyl lysine isopeptide (Lys-Gly) (interchain with G-Cter in SUMO1); alternate cross-link involves residue Lys-117. Residue Lys-117 forms a Glycyl lysine isopeptide (Lys-Gly) (interchain with G-Cter in SUMO2); alternate linkage. The span at 118–130 (QENESSYDRRPLD) shows a compositional bias: basic and acidic residues. Residue Lys-143 forms a Glycyl lysine isopeptide (Lys-Gly) (interchain with G-Cter in SUMO1); alternate linkage. Residue Lys-143 forms a Glycyl lysine isopeptide (Lys-Gly) (interchain with G-Cter in SUMO2); alternate linkage. Positions 146–206 (MKQEAPPSFL…QPPAEEDEDD (61 aa)) are disordered. Residues Lys-147 and Lys-163 each participate in a glycyl lysine isopeptide (Lys-Gly) (interchain with G-Cter in SUMO2) cross-link. Positions 174 to 193 (RPFEENRGRGYFEHREDRRG) are enriched in basic and acidic residues. One can recognise a B30.2/SPRY domain in the interval 192-389 (RGRSPQPPAE…VEFNFGQRAE (198 aa)). Ser-195 carries the phosphoserine modification. Residue Thr-210 is modified to Phosphothreonine. Positions 214-859 (IDTYNCDLHF…GSTQGGTSTQ (646 aa)) are necessary for interaction with TP53. Glycyl lysine isopeptide (Lys-Gly) (interchain with G-Cter in SUMO2) cross-links involve residues Lys-271 and Lys-450. Positions 457-595 (NAIMDKMRVM…EEADKLVRQY (139 aa)) are necessary for interaction with BRD7 and transcriptional activation. Ser-513 is subject to Phosphoserine. Lys-540 participates in a covalent cross-link: Glycyl lysine isopeptide (Lys-Gly) (interchain with G-Cter in SUMO2). Over residues 595-612 (YNEEGRKAGPPPEKRFDS) the composition is skewed to basic and acidic residues. The interval 595–814 (YNEEGRKAGP…PPTAQTYPQP (220 aa)) is disordered. 5 consecutive repeat copies span residues 613-615 (RGG), 620-622 (RGG), 639-641 (RGG), 645-647 (RGG), and 659-661 (RGG). 2 stretches are compositionally biased toward gly residues: residues 613–626 (RGGG…GGGF) and 634–670 (PPGG…GGGY). Positions 613-661 (RGGGFRGRGGGGGFQRYDNRGPPGGNRGGFQNRGGGGGSGGGGGNYRGG) are 5 X 3 AA repeats of R-G-G. The necessary for transcription repression stretch occupies residues 613 to 661 (RGGGFRGRGGGGGFQRYDNRGPPGGNRGGFQNRGGGGGSGGGGGNYRGG). Asymmetric dimethylarginine is present on Arg-639. Asymmetric dimethylarginine; alternate is present on residues Arg-645 and Arg-659. Residues Arg-645 and Arg-659 each carry the omega-N-methylarginine; alternate modification. Residues Arg-664 and Arg-674 each carry the omega-N-methylarginine modification. A compositionally biased stretch (low complexity) spans 671-696 (NQNRWGNNNRDNNNSNNRGNYNRAPQ). Residues 697–720 (QQPPPQQPPPPQPPPQQPPPPPSY) show a composition bias toward pro residues. At Ser-721 the chain carries Phosphoserine. Positions 728–744 (GASSYNKNSNIPGSSAN) are enriched in polar residues. Over residues 745–775 (TSTPTVSSYTPPQPSYSQPPYNQGGYTQGYT) the composition is skewed to low complexity. 2 stretches are compositionally biased toward pro residues: residues 776–786 (APPPPPPPPPA) and 796–807 (NPAPYTPPPPPT).

Interacts with BRD7, PRMT2, TP53 and NXF1. Associates with histones and BRD7. Methylated.

It is found in the nucleus. Functionally, acts as a basic transcriptional regulator. Represses basic transcription driven by several virus and cellular promoters. When associated with BRD7, activates transcription of glucocorticoid-responsive promoter in the absence of ligand-stimulation. Also plays a role in mRNA processing and transport. Binds avidly to poly(G) and poly(C) RNA homopolymers in vitro. The protein is Heterogeneous nuclear ribonucleoprotein U-like protein 1 (Hnrnpul1) of Mus musculus (Mouse).